Reading from the N-terminus, the 161-residue chain is Pathogenesis-related protein 1 (161 aa).

Positions 1–26 (MKVTSYSRILIILAALVGALVVPLKA) are cleaved as a signal peptide. The SCP domain occupies 34–149 (VNAHNQARSQ…NGGTIISCNY (116 aa)). 3 disulfide bridges follow: cysteine 70/cysteine 138, cysteine 113/cysteine 117, and cysteine 133/cysteine 147.

Belongs to the CRISP family. Expressed in flowers, stems and roots but not in leaves.

In terms of biological role, probably involved in the defense reaction of plants against pathogens. The sequence is that of Pathogenesis-related protein 1 from Arabidopsis thaliana (Mouse-ear cress).